The following is a 526-amino-acid chain: Glutamate--cysteine ligase (526 aa).

This sequence belongs to the glutamate--cysteine ligase type 1 family. Type 1 subfamily.

The enzyme catalyses L-cysteine + L-glutamate + ATP = gamma-L-glutamyl-L-cysteine + ADP + phosphate + H(+). It participates in sulfur metabolism; glutathione biosynthesis; glutathione from L-cysteine and L-glutamate: step 1/2. The chain is Glutamate--cysteine ligase from Proteus mirabilis (strain HI4320).